A 342-amino-acid polypeptide reads, in one-letter code: Anthranilate phosphoribosyltransferase (342 aa).

5-phospho-alpha-D-ribose 1-diphosphate-binding positions include glycine 79, glycine 82–aspartate 83, threonine 87, asparagine 89–threonine 92, lysine 107–serine 115, and serine 119. Glycine 79 contacts anthranilate. Serine 91 contributes to the Mg(2+) binding site. An anthranilate-binding site is contributed by asparagine 110. Residue arginine 165 coordinates anthranilate. Aspartate 223 and glutamate 224 together coordinate Mg(2+).

Belongs to the anthranilate phosphoribosyltransferase family. As to quaternary structure, homodimer. The cofactor is Mg(2+).

The catalysed reaction is N-(5-phospho-beta-D-ribosyl)anthranilate + diphosphate = 5-phospho-alpha-D-ribose 1-diphosphate + anthranilate. It functions in the pathway amino-acid biosynthesis; L-tryptophan biosynthesis; L-tryptophan from chorismate: step 2/5. In terms of biological role, catalyzes the transfer of the phosphoribosyl group of 5-phosphorylribose-1-pyrophosphate (PRPP) to anthranilate to yield N-(5'-phosphoribosyl)-anthranilate (PRA). In Buchnera aphidicola subsp. Acyrthosiphon pisum (strain 5A), this protein is Anthranilate phosphoribosyltransferase.